The sequence spans 339 residues: Fructose-1,6-bisphosphatase class 1 (339 aa).

E94, D116, L118, and D119 together coordinate Mg(2+). Residues 119 to 122 (DGSS), N210, and K276 contribute to the substrate site. E282 is a binding site for Mg(2+).

This sequence belongs to the FBPase class 1 family. In terms of assembly, homotetramer. Mg(2+) is required as a cofactor.

The protein localises to the cytoplasm. It catalyses the reaction beta-D-fructose 1,6-bisphosphate + H2O = beta-D-fructose 6-phosphate + phosphate. It participates in carbohydrate biosynthesis; gluconeogenesis. This Burkholderia ambifaria (strain MC40-6) protein is Fructose-1,6-bisphosphatase class 1.